A 341-amino-acid chain; its full sequence is Protein MENT (341 aa).

The signal sequence occupies residues M1–A23. A disordered region spans residues A115–P196. The segment covering A127 to P155 has biased composition (polar residues).

Post-translationally, phosphorylation sites are present in the extracellular medium. In terms of tissue distribution, plasma. Overexpressed in lymphomas.

It localises to the secreted. Functionally, involved in control of cellular proliferation. Onconcogenic modifier contributing to the tumor suppressor function of DNMT3B. The chain is Protein MENT (MENT) from Homo sapiens (Human).